The primary structure comprises 712 residues: MSPLQPLVLALLVLACCSAVPRRRQPTVVVFPGEPRTNLTNRQLAEEYLYRYGYTPGAELSEDGQSLQRALLRFQRRLSLPETGELDSTTLNAMRAPRCGVPDVGRFQTFEGELKWHHHNITYWIQNYSEDLPRAVIDDAFARAFALWSAVTPLTFTRVYGPEADIVIQFGVREHGDGYPFDGKNGLLAHAFPPGKGIQGDAHFDDEELWSLGKGVVIPTYFGNAKGAACHFPFTFEGRSYSACTTDGRSDDMLWCSTTADYDADRQFGFCPSERLYTQDGNADGKPCVFPFTFQGRTYSACTSDGRSDGYRWCATTANYDQDKLYGFCPTRVDATVTGGNAAGELCVFPFTFLGKEYSACTREGRNDGHLWCATTSNFDKDKKWGFCPDQGYSLFLVAAHEFGHALGLDHTSVPEALMYPMYRFTEEHPLHRDDVQGIQHLYGPRPEPEPRPPTTTTTTTTEPQPTAPPTVCVTGPPTARPSEGPTTGPTGPPAAGPTGPPTAGPSAAPTESPDPAEDVCNVDIFDAIAEIRNRLHFFKAGKYWRLSEGGGRRVQGPFLVKSKWPALPRKLDSAFEDPLTKKIFFFSGRQVWVYTGASLLGPRRLDKLGLGPEVAQVTGALPRPEGKVLLFSGQSFWRFDVKTQKVDPQSVTPVDQMFPGVPISTHDIFQYQEKAYFCQDHFYWRVSSQNEVNQVDYVGYVTFDLLKCPED.

A signal peptide spans 1-19 (MSPLQPLVLALLVLACCSA). Positions 20-106 (VPRRRQPTVV…PRCGVPDVGR (87 aa)) are cleaved as a propeptide — activation peptide. The N-linked (GlcNAc...) asparagine glycan is linked to asparagine 38. The Cysteine switch motif lies at 97-104 (PRCGVPDV). Cysteine 99 is a binding site for Zn(2+). N-linked (GlcNAc...) asparagine glycosylation is found at asparagine 120 and asparagine 127. Residues aspartate 131 and aspartate 165 each coordinate Ca(2+). Residues histidine 175 and aspartate 177 each coordinate Zn(2+). Residues aspartate 182, glycine 183, asparagine 185, and leucine 187 each contribute to the Ca(2+) site. Residue histidine 190 coordinates Zn(2+). Residues glycine 197, glutamine 199, and aspartate 201 each contribute to the Ca(2+) site. Histidine 203 is a Zn(2+) binding site. 3 residues coordinate Ca(2+): aspartate 205, aspartate 206, and glutamate 208. 3 Fibronectin type-II domains span residues 225–273 (AKGA…FCPS), 283–331 (ADGK…FCPT), and 342–390 (AAGE…FCPD). 6 disulfide bridges follow: cysteine 230/cysteine 256, cysteine 244/cysteine 271, cysteine 288/cysteine 314, cysteine 302/cysteine 329, cysteine 347/cysteine 373, and cysteine 361/cysteine 388. Residue histidine 401 participates in Zn(2+) binding. The active site involves glutamate 402. Residues histidine 405 and histidine 411 each contribute to the Zn(2+) site. Positions 440 to 519 (QHLYGPRPEP…PTESPDPAED (80 aa)) are disordered. Low complexity predominate over residues 455-465 (TTTTTTTTEPQ). The segment covering 491-504 (TGPPAAGPTGPPTA) has biased composition (pro residues). A compositionally biased stretch (low complexity) spans 505–514 (GPSAAPTESP). Cysteine 521 and cysteine 709 are joined by a disulfide. Hemopexin repeat units lie at residues 523 to 568 (VDIF…WPAL), 569 to 613 (PRKL…GLGP), 615 to 662 (VAQV…FPGV), and 663 to 709 (PIST…LLKC).

Belongs to the peptidase M10A family. Exists as monomer or homodimer; disulfide-linked. Also exists as heterodimer with LCN2. Macrophages and transformed cell lines produce only the monomeric form. Interacts with ECM1. Requires Zn(2+) as cofactor. Ca(2+) serves as cofactor. N- and O-glycosylated.

The protein localises to the secreted. The protein resides in the extracellular space. It is found in the extracellular matrix. It carries out the reaction Cleavage of gelatin types I and V and collagen types IV and V.. Matrix metalloproteinase that plays an essential role in local proteolysis of the extracellular matrix and in leukocyte migration. Could play a role in bone osteoclastic resorption. Cleaves KiSS1 at a Gly-|-Leu bond. Cleaves NINJ1 to generate the Secreted ninjurin-1 form. Cleaves type IV and type V collagen into large C-terminal three quarter fragments and shorter N-terminal one quarter fragments. Degrades fibronectin but not laminin or Pz-peptide. This chain is Matrix metalloproteinase-9, found in Bos taurus (Bovine).